The primary structure comprises 224 residues: Adenylate kinase (224 aa).

Glycine 10–threonine 15 is an ATP binding site. The tract at residues glutamate 30–valine 59 is NMP. AMP-binding positions include serine 31, arginine 36, aspartate 57–valine 59, glycine 85–arginine 88, and glutamine 92. Residues glycine 126–aspartate 165 form an LID region. Arginine 127 provides a ligand contact to ATP. Residues arginine 162 and arginine 174 each coordinate AMP. An ATP-binding site is contributed by proline 211.

This sequence belongs to the adenylate kinase family. As to quaternary structure, monomer.

The protein localises to the cytoplasm. It carries out the reaction AMP + ATP = 2 ADP. It functions in the pathway purine metabolism; AMP biosynthesis via salvage pathway; AMP from ADP: step 1/1. Its function is as follows. Catalyzes the reversible transfer of the terminal phosphate group between ATP and AMP. Plays an important role in cellular energy homeostasis and in adenine nucleotide metabolism. The sequence is that of Adenylate kinase from Desulfosudis oleivorans (strain DSM 6200 / JCM 39069 / Hxd3) (Desulfococcus oleovorans).